An 85-amino-acid chain; its full sequence is Granaticin polyketide synthase acyl carrier protein (85 aa).

The Carrier domain occupies 3–81 (RLTLDGLRTI…VLLDLVNGAQ (79 aa)). Residue serine 41 is modified to O-(pantetheine 4'-phosphoryl)serine.

4'-phosphopantetheine is transferred from CoA to a specific serine of the apo-ACP-like protein.

It participates in antibiotic biosynthesis; granaticin biosynthesis. In terms of biological role, acyl carrier protein. The polypeptide is Granaticin polyketide synthase acyl carrier protein (Streptomyces violaceoruber).